The following is a 605-amino-acid chain: Protein ZRG17 (605 aa).

Topologically, residues 1–225 (METPQMNAIQ…DLLSNLPWPK (225 aa)) are cytoplasmic. Phosphoserine is present on residues Ser16 and Ser131. The tract at residues 118–178 (PAPKLVPPPP…PSSAASRTSF (61 aa)) is disordered. The segment covering 143–176 (SKRSSMTLDSPFNFTTSTLQPHQQTPPSSAASRT) has biased composition (polar residues). A helical membrane pass occupies residues 226 to 246 (AYIQLSIAALQIFACLITFQV). The Lumenal portion of the chain corresponds to 247–254 (GHLYSWSN). The chain crosses the membrane as a helical span at residues 255 to 275 (FITLSHFITYDIIGSLVIIFV). The Cytoplasmic segment spans residues 276–287 (ENLSQFQVWFTG). A helical transmembrane segment spans residues 288–308 (TITFPFGLNRIDVLLSFALAV). Residue Ser309 is a topological domain, lumenal. A helical membrane pass occupies residues 310-330 (LCFVGLDLLFHIIEEFIVLFV). Topologically, residues 331–363 (ESGSSLTNNHDHDEINEQIPHSHIANANDSQNE) are cytoplasmic. Residues 364-384 (NITLWYSILMINLVLSTLSLY) form a helical membrane-spanning segment. The Lumenal portion of the chain corresponds to 385–399 (KTFYANKYSNLKTKN). The helical transmembrane segment at 400-420 (PIITITYTAYLFIYPLLLDLL) threads the bilayer. The Cytoplasmic portion of the chain corresponds to 421–422 (SS). A helical membrane pass occupies residues 423–443 (ISDYLATLVISSLILWHGLTI). The Lumenal segment spans residues 444-545 (ARWTSTVLLM…ERLSEFKSRY (102 aa)). Polar residues predominate over residues 473 to 482 (DTTAHTQQVE). The interval 473–497 (DTTAHTQQVESKAAKEKPSVRPRSM) is disordered. The residue at position 498 (Ser498) is a Phosphoserine. A helical transmembrane segment spans residues 546-566 (ILNYDDIVISKVNFTLYVVLI). Topologically, residues 567-605 (KITMKGGSDDDELMLRLAIDKCIQTSIPTCETTIDIDRI) are cytoplasmic.

It localises to the endoplasmic reticulum membrane. The protein is Protein ZRG17 (ZRG17) of Saccharomyces cerevisiae (strain ATCC 204508 / S288c) (Baker's yeast).